Here is a 270-residue protein sequence, read N- to C-terminus: Tryptophan synthase alpha chain (270 aa).

Active-site proton acceptor residues include E49 and D60.

This sequence belongs to the TrpA family. In terms of assembly, tetramer of two alpha and two beta chains.

It carries out the reaction (1S,2R)-1-C-(indol-3-yl)glycerol 3-phosphate + L-serine = D-glyceraldehyde 3-phosphate + L-tryptophan + H2O. Its pathway is amino-acid biosynthesis; L-tryptophan biosynthesis; L-tryptophan from chorismate: step 5/5. Functionally, the alpha subunit is responsible for the aldol cleavage of indoleglycerol phosphate to indole and glyceraldehyde 3-phosphate. This chain is Tryptophan synthase alpha chain, found in Pseudomonas fluorescens (strain ATCC BAA-477 / NRRL B-23932 / Pf-5).